We begin with the raw amino-acid sequence, 395 residues long: Elongation factor Tu (395 aa).

Residues 10 to 204 (KPHVNIGTIG…EVDAYIPTPE (195 aa)) enclose the tr-type G domain. Residues 19–26 (GHVDHGKT) are G1. A GTP-binding site is contributed by 19–26 (GHVDHGKT). Thr-26 lines the Mg(2+) pocket. The segment at 60–64 (GITIS) is G2. Positions 81–84 (DCPG) are G3. GTP is bound by residues 81 to 85 (DCPGH) and 136 to 139 (NKCD). Residues 136-139 (NKCD) are G4. The segment at 174 to 176 (SAL) is G5.

The protein belongs to the TRAFAC class translation factor GTPase superfamily. Classic translation factor GTPase family. EF-Tu/EF-1A subfamily. In terms of assembly, monomer.

Its subcellular location is the cytoplasm. It catalyses the reaction GTP + H2O = GDP + phosphate + H(+). Functionally, GTP hydrolase that promotes the GTP-dependent binding of aminoacyl-tRNA to the A-site of ribosomes during protein biosynthesis. This chain is Elongation factor Tu, found in Bacillus anthracis (strain A0248).